A 54-amino-acid polypeptide reads, in one-letter code: Large ribosomal subunit protein bL33A (54 aa).

It belongs to the bacterial ribosomal protein bL33 family.

The protein is Large ribosomal subunit protein bL33A of Mesoplasma florum (strain ATCC 33453 / NBRC 100688 / NCTC 11704 / L1) (Acholeplasma florum).